The sequence spans 195 residues: Imidazoleglycerol-phosphate dehydratase (195 aa).

It belongs to the imidazoleglycerol-phosphate dehydratase family.

It localises to the cytoplasm. The catalysed reaction is D-erythro-1-(imidazol-4-yl)glycerol 3-phosphate = 3-(imidazol-4-yl)-2-oxopropyl phosphate + H2O. Its pathway is amino-acid biosynthesis; L-histidine biosynthesis; L-histidine from 5-phospho-alpha-D-ribose 1-diphosphate: step 6/9. This Methylobacterium radiotolerans (strain ATCC 27329 / DSM 1819 / JCM 2831 / NBRC 15690 / NCIMB 10815 / 0-1) protein is Imidazoleglycerol-phosphate dehydratase.